A 262-amino-acid chain; its full sequence is tRNA (guanine-N(1)-)-methyltransferase (262 aa).

S-adenosyl-L-methionine-binding positions include Gly-113 and 137 to 142 (IGDYVL).

This sequence belongs to the RNA methyltransferase TrmD family. In terms of assembly, homodimer.

The protein localises to the cytoplasm. The enzyme catalyses guanosine(37) in tRNA + S-adenosyl-L-methionine = N(1)-methylguanosine(37) in tRNA + S-adenosyl-L-homocysteine + H(+). Specifically methylates guanosine-37 in various tRNAs. The chain is tRNA (guanine-N(1)-)-methyltransferase from Saccharopolyspora erythraea (strain ATCC 11635 / DSM 40517 / JCM 4748 / NBRC 13426 / NCIMB 8594 / NRRL 2338).